We begin with the raw amino-acid sequence, 154 residues long: Large ribosomal subunit protein uL30 (154 aa).

Residues 114–139 (PTLRLHPPRGGHDGIKHPTKEGGQLG) form a disordered region. Over residues 123–133 (GGHDGIKHPTK) the composition is skewed to basic and acidic residues.

It belongs to the universal ribosomal protein uL30 family. As to quaternary structure, part of the 50S ribosomal subunit.

The chain is Large ribosomal subunit protein uL30 from Natronomonas pharaonis (strain ATCC 35678 / DSM 2160 / CIP 103997 / JCM 8858 / NBRC 14720 / NCIMB 2260 / Gabara) (Halobacterium pharaonis).